The chain runs to 313 residues: MAALTDLSFMYRWFKNCNLVGNLSEKYVFITGCDSGFGNLLAKQLVDRGMQVLAACFTEEGSQKLQRDTSYRLQTTLLDVTKSESIKAAAQWVRDKVGEQGLWALVNNAGVGLPSGPNEWLTKDDFVKVINVNLVGLIEVTLHMLPMVKRARGRVVNMSSSGGRVAVIGGGYCVSKFGVEAFSDSIRRELYYFGVKVCIIEPGNYRTAILGKENLESRMRKLWERLPQETRDSYGEDYFRIYTDKLKNIMQVAEPRVRDVINSMEHAIVSRSPRIRYNPGLDAKLLYIPLAKLPTPVTDFILSRYLPRPADSV.

NADP(+) is bound at residue 29–53; it reads FITGCDSGFGNLLAKQLVDRGMQVL. S160 provides a ligand contact to substrate. The Proton acceptor role is filled by Y172. S185 carries the phosphoserine modification.

Belongs to the short-chain dehydrogenases/reductases (SDR) family. As to expression, expressed in the skin. Expressed in granular and cornified layers of the epidermis (at protein level). Highly expressed in liver.

It is found in the cytoplasm. It carries out the reaction a N-[omega-(9R,10R)-epoxy-(13R)-hydroxy-(11E)-octadecenoyloxy]acyl-beta-D-glucosyl-(1&lt;-&gt;1)-sphing-4E-enine + NAD(+) = a N-[omega-(9R,10R)-epoxy-13-oxo-(11E)-octadecenoyloxy]acyl-beta-D-glucosyl-(1&lt;-&gt;1)-sphing-4E-enine + NADH + H(+). It catalyses the reaction a N-[omega-(9R,10R)-epoxy-(13R)-hydroxy-(11E)-octadecenoyloxy]-acylsphing-4E-enine + NAD(+) = a N-[omega-(9R,10R)-epoxy-13-oxo-(11E)-octadecenoyloxy]-acylsphing-4E-enine + NADH + H(+). Functionally, plays a crucial role in the formation of the epidermal permeability barrier. Catalyzes the NAD+-dependent dehydrogenation of the linoleate 9,10-trans-epoxy-11E-13-alcohol esterified in omega-O-acylceramides (such as in N-[omega-(9R,10R)-epoxy-(13R)-hydroxy-(11E)-octadecenoyloxy]-acylsphing-4E-enine) to the corresponding 13-ketone, the reactive moiety required for binding of epidermal ceramides to proteins. Displays weak conversion of all-trans-retinal to all-trans-retinol in the presence of NADH. Has apparently no steroid dehydrogenase activity. This Homo sapiens (Human) protein is Short-chain dehydrogenase/reductase family 9C member 7 (SDR9C7).